The sequence spans 226 residues: Deoxyribose-phosphate aldolase (226 aa).

Residue aspartate 94 is the Proton donor/acceptor of the active site. Lysine 156 functions as the Schiff-base intermediate with acetaldehyde in the catalytic mechanism. The Proton donor/acceptor role is filled by lysine 185.

The protein belongs to the DeoC/FbaB aldolase family. DeoC type 1 subfamily.

Its subcellular location is the cytoplasm. It catalyses the reaction 2-deoxy-D-ribose 5-phosphate = D-glyceraldehyde 3-phosphate + acetaldehyde. The protein operates within carbohydrate degradation; 2-deoxy-D-ribose 1-phosphate degradation; D-glyceraldehyde 3-phosphate and acetaldehyde from 2-deoxy-alpha-D-ribose 1-phosphate: step 2/2. Functionally, catalyzes a reversible aldol reaction between acetaldehyde and D-glyceraldehyde 3-phosphate to generate 2-deoxy-D-ribose 5-phosphate. In Burkholderia lata (strain ATCC 17760 / DSM 23089 / LMG 22485 / NCIMB 9086 / R18194 / 383), this protein is Deoxyribose-phosphate aldolase.